The primary structure comprises 252 residues: tRNA (guanine-N(1)-)-methyltransferase (252 aa).

Residues Gly113 and 133-138 each bind S-adenosyl-L-methionine; that span reads IGDYVL.

The protein belongs to the RNA methyltransferase TrmD family. Homodimer.

It localises to the cytoplasm. It catalyses the reaction guanosine(37) in tRNA + S-adenosyl-L-methionine = N(1)-methylguanosine(37) in tRNA + S-adenosyl-L-homocysteine + H(+). Specifically methylates guanosine-37 in various tRNAs. In Baumannia cicadellinicola subsp. Homalodisca coagulata, this protein is tRNA (guanine-N(1)-)-methyltransferase.